The chain runs to 366 residues: uncharacterized protein (366 aa).

The tract at residues 1-135 (MNQTGRTIGG…PPKNVDTIDK (135 aa)) is disordered. Positions 26-38 (PSEDRVSSRDETP) are enriched in basic and acidic residues. Ser69 carries the post-translational modification Phosphoserine. Phosphothreonine is present on Thr76. Lys78 participates in a covalent cross-link: Glycyl lysine isopeptide (Lys-Gly) (interchain with G-Cter in ubiquitin). The segment covering 97 to 108 (QHNHHHHRRTSH) has biased composition (basic residues). Residue Lys187 forms a Glycyl lysine isopeptide (Lys-Gly) (interchain with G-Cter in ubiquitin) linkage. Thr189 carries the phosphothreonine modification. Lys242 is covalently cross-linked (Glycyl lysine isopeptide (Lys-Gly) (interchain with G-Cter in ubiquitin)). Residues Ser288 and Ser294 each carry the phosphoserine modification. Positions 313–366 (THSGHLEQKDVDDNRTSVPVTATQGSGHEDVVKKENTGNKLLRRVKSLKTSKKH) are disordered. Basic and acidic residues predominate over residues 316–327 (GHLEQKDVDDNR). A compositionally biased stretch (polar residues) spans 328 to 338 (TSVPVTATQGS). Residues 339–349 (GHEDVVKKENT) show a composition bias toward basic and acidic residues. The span at 353–366 (LLRRVKSLKTSKKH) shows a compositional bias: basic residues. At Ser359 the chain carries Phosphoserine.

The protein belongs to the pal1 family.

It localises to the cytoplasm. It is found in the nucleus. This is an uncharacterized protein from Saccharomyces cerevisiae (strain ATCC 204508 / S288c) (Baker's yeast).